An 81-amino-acid chain; its full sequence is Thrombin-like enzyme collinein-3 (81 aa).

Residue aspartate 4 is part of the active site. Cysteines 51 and 68 form a disulfide.

Monomer. As to expression, expressed by the vanom gland.

The protein resides in the secreted. In terms of biological role, thrombin-like snake venom serine protease. This chain is Thrombin-like enzyme collinein-3, found in Crotalus durissus collilineatus (Brazilian rattlesnake).